A 571-amino-acid polypeptide reads, in one-letter code: Proline--tRNA ligase (571 aa).

This sequence belongs to the class-II aminoacyl-tRNA synthetase family. ProS type 1 subfamily. Homodimer.

The protein resides in the cytoplasm. It carries out the reaction tRNA(Pro) + L-proline + ATP = L-prolyl-tRNA(Pro) + AMP + diphosphate. Functionally, catalyzes the attachment of proline to tRNA(Pro) in a two-step reaction: proline is first activated by ATP to form Pro-AMP and then transferred to the acceptor end of tRNA(Pro). As ProRS can inadvertently accommodate and process non-cognate amino acids such as alanine and cysteine, to avoid such errors it has two additional distinct editing activities against alanine. One activity is designated as 'pretransfer' editing and involves the tRNA(Pro)-independent hydrolysis of activated Ala-AMP. The other activity is designated 'posttransfer' editing and involves deacylation of mischarged Ala-tRNA(Pro). The misacylated Cys-tRNA(Pro) is not edited by ProRS. The sequence is that of Proline--tRNA ligase from Vibrio parahaemolyticus serotype O3:K6 (strain RIMD 2210633).